The chain runs to 114 residues: UPF0102 protein Amet_2739 (114 aa).

The protein belongs to the UPF0102 family.

In Alkaliphilus metalliredigens (strain QYMF), this protein is UPF0102 protein Amet_2739.